A 242-amino-acid chain; its full sequence is MNDWLFDLGNSRFKCASLREGVIGPVTVLPYLTETMDAFALQELPRGRVAYLASVAAPAITTHVLEVLKIHFEQVQVAATVAACAGVRIAYAHPERFGVDRFLALLGSYGEGNVLVVGVGTALTIDLLAANGCHLGGRISASPTLMRQALHARAEQLPLSGGNYLEFAEDTEDALVSGCNGAAVALIERSLYEAHQRLDQSVRLLLHGGGVASLLPWLGDVVHRPTLVLDGLAIWAAVAANV.

Asp7–Lys14 contributes to the ATP binding site. Substrate-binding positions include Tyr91 and Gly98–Arg101. Asp100 functions as the Proton acceptor in the catalytic mechanism. Thr121 is an ATP binding site. Thr171 is a substrate binding site.

It belongs to the type III pantothenate kinase family. As to quaternary structure, homodimer. Requires NH4(+) as cofactor. K(+) is required as a cofactor.

The protein resides in the cytoplasm. The catalysed reaction is (R)-pantothenate + ATP = (R)-4'-phosphopantothenate + ADP + H(+). The protein operates within cofactor biosynthesis; coenzyme A biosynthesis; CoA from (R)-pantothenate: step 1/5. Catalyzes the phosphorylation of pantothenate (Pan), the first step in CoA biosynthesis. This is Type III pantothenate kinase from Xylella fastidiosa (strain 9a5c).